Consider the following 411-residue polypeptide: Serine hydroxymethyltransferase (411 aa).

(6S)-5,6,7,8-tetrahydrofolate is bound by residues L119 and 123–125 (GHL). K228 is subject to N6-(pyridoxal phosphate)lysine. 351–353 (SPF) provides a ligand contact to (6S)-5,6,7,8-tetrahydrofolate.

Belongs to the SHMT family. In terms of assembly, homodimer. The cofactor is pyridoxal 5'-phosphate.

The protein localises to the cytoplasm. The enzyme catalyses (6R)-5,10-methylene-5,6,7,8-tetrahydrofolate + glycine + H2O = (6S)-5,6,7,8-tetrahydrofolate + L-serine. It participates in one-carbon metabolism; tetrahydrofolate interconversion. The protein operates within amino-acid biosynthesis; glycine biosynthesis; glycine from L-serine: step 1/1. Functionally, catalyzes the reversible interconversion of serine and glycine with tetrahydrofolate (THF) serving as the one-carbon carrier. This reaction serves as the major source of one-carbon groups required for the biosynthesis of purines, thymidylate, methionine, and other important biomolecules. Also exhibits THF-independent aldolase activity toward beta-hydroxyamino acids, producing glycine and aldehydes, via a retro-aldol mechanism. This Clostridium novyi (strain NT) protein is Serine hydroxymethyltransferase.